Here is a 1072-residue protein sequence, read N- to C-terminus: PWWP domain-containing protein 1 (1072 aa).

A disordered region spans residues 21-133 (DSIQDPKVTP…ADEKELDLGL (113 aa)). Residues 25 to 38 (DPKVTPDDTVVDSS) show a composition bias toward low complexity. Residues 66 to 77 (RVLESERSEKDG) show a composition bias toward basic and acidic residues. The segment covering 96 to 128 (KDDESSEVKEEEEEEDGSDDQSSELGSEADEKE) has biased composition (acidic residues). A PWWP domain is found at 173–234 (VGDLVWGKVK…PAELIPFEPN (62 aa)). The interval 365–387 (KSPRSSVSTLEPHNRAPPRAPLS) is disordered. Positions 366–375 (SPRSSVSTLE) are enriched in polar residues. Positions 402–409 (SKKPTKVK) match the Nuclear localization signal 1 motif. 4 disordered regions span residues 486 to 619 (AIPG…GEAG), 681 to 738 (LSVS…KTNQ), 871 to 931 (KAEP…NGNR), and 944 to 973 (ENSS…SSSV). Basic and acidic residues predominate over residues 498 to 526 (SLDEEKGLAEKSKERMEERAAVLPEHGKS). A compositionally biased stretch (polar residues) spans 545–568 (AGSSLQPLLESHTSASEGKSSTGS). Short sequence motifs (nuclear localization signal) lie at residues 596-603 (KKKKKEPD), 705-712 (VKRTEDPS), and 733-740 (LKKTNQLK). The segment covering 706–729 (KRTEDPSKAGKKRLSSDRQDEIPS) has biased composition (basic and acidic residues). The span at 871 to 880 (KAEPREPENT) shows a compositional bias: basic and acidic residues. The span at 897 to 906 (LHQPTLPPPN) shows a compositional bias: pro residues. Positions 921-930 (SSSSNNGNGN) are enriched in low complexity. The segment covering 947-966 (SKANTEPPQVTMTLNRNSGP) has biased composition (polar residues).

It belongs to the PDP family. As to quaternary structure, interacts with MSI4/FVE. Component of the PRC2 (polycomb repressive complex 2) complex which regulates histone methylation on histone H3K27.

The protein localises to the nucleus. Together with PDP2, PDP3 and PDP6, interacts with MSI4/FVE and MSI5 to suppress FLC, MAF4 and MAF5 expression by regulating the function of the PRC2 complex and modulating H3K27me3 level, thereby promoting flowering. The polypeptide is PWWP domain-containing protein 1 (Arabidopsis thaliana (Mouse-ear cress)).